A 162-amino-acid chain; its full sequence is ATP-dependent Clp protease adapter protein CLPS1, chloroplastic (162 aa).

Residues 1 to 58 (MAASCLRPAPTASAQMMTRSPVAGLPRPCSALQRSGCTLQGAFGTFAPQTTRTFVVTW) constitute a chloroplast transit peptide.

This sequence belongs to the ClpS family.

It localises to the plastid. Its subcellular location is the chloroplast stroma. Small adapter protein that modulate the activity of plastid Clp protease system (CLPC). Probably involved in substrate selection for plastid CLPC. The sequence is that of ATP-dependent Clp protease adapter protein CLPS1, chloroplastic from Chlamydomonas reinhardtii (Chlamydomonas smithii).